The primary structure comprises 373 residues: tRNA N6-adenosine threonylcarbamoyltransferase (373 aa).

A divalent metal cation is bound by residues H133, H137, and Y154. Substrate is bound by residues Y154–G158, D186, G201, E205, and N302. A divalent metal cation is bound at residue D331.

It belongs to the KAE1 / TsaD family. In terms of assembly, component of the EKC/KEOPS complex composed of at least BUD32, CGI121, GON7, KAE1 and PCC1; the whole complex dimerizes. It depends on a divalent metal cation as a cofactor.

It is found in the cytoplasm. Its subcellular location is the nucleus. The enzyme catalyses L-threonylcarbamoyladenylate + adenosine(37) in tRNA = N(6)-L-threonylcarbamoyladenosine(37) in tRNA + AMP + H(+). Component of the EKC/KEOPS complex that is required for the formation of a threonylcarbamoyl group on adenosine at position 37 (t(6)A37) in tRNAs that read codons beginning with adenine. The complex is probably involved in the transfer of the threonylcarbamoyl moiety of threonylcarbamoyl-AMP (TC-AMP) to the N6 group of A37. KAE1 likely plays a direct catalytic role in this reaction, but requires other protein(s) of the complex to fulfill this activity. The EKC/KEOPS complex also promotes both telomere uncapping and telomere elongation. The complex is required for efficient recruitment of transcriptional coactivators. The protein is tRNA N6-adenosine threonylcarbamoyltransferase of Debaryomyces hansenii (strain ATCC 36239 / CBS 767 / BCRC 21394 / JCM 1990 / NBRC 0083 / IGC 2968) (Yeast).